Reading from the N-terminus, the 471-residue chain is N-succinylglutamate 5-semialdehyde dehydrogenase (471 aa).

207–212 (GSAHAG) provides a ligand contact to NAD(+). Residues glutamate 230 and cysteine 264 contribute to the active site.

The protein belongs to the aldehyde dehydrogenase family. AstD subfamily.

The catalysed reaction is N-succinyl-L-glutamate 5-semialdehyde + NAD(+) + H2O = N-succinyl-L-glutamate + NADH + 2 H(+). The protein operates within amino-acid degradation; L-arginine degradation via AST pathway; L-glutamate and succinate from L-arginine: step 4/5. Catalyzes the NAD-dependent reduction of succinylglutamate semialdehyde into succinylglutamate. The chain is N-succinylglutamate 5-semialdehyde dehydrogenase from Novosphingobium aromaticivorans (strain ATCC 700278 / DSM 12444 / CCUG 56034 / CIP 105152 / NBRC 16084 / F199).